We begin with the raw amino-acid sequence, 295 residues long: Phosphatidylserine decarboxylase proenzyme (295 aa).

Residues Asp-90, His-147, and Ser-254 each act as charge relay system; for autoendoproteolytic cleavage activity in the active site. Residue Ser-254 is the Schiff-base intermediate with substrate; via pyruvic acid; for decarboxylase activity of the active site. Ser-254 bears the Pyruvic acid (Ser); by autocatalysis mark.

It belongs to the phosphatidylserine decarboxylase family. PSD-B subfamily. Prokaryotic type I sub-subfamily. As to quaternary structure, heterodimer of a large membrane-associated beta subunit and a small pyruvoyl-containing alpha subunit. It depends on pyruvate as a cofactor. Is synthesized initially as an inactive proenzyme. Formation of the active enzyme involves a self-maturation process in which the active site pyruvoyl group is generated from an internal serine residue via an autocatalytic post-translational modification. Two non-identical subunits are generated from the proenzyme in this reaction, and the pyruvate is formed at the N-terminus of the alpha chain, which is derived from the carboxyl end of the proenzyme. The autoendoproteolytic cleavage occurs by a canonical serine protease mechanism, in which the side chain hydroxyl group of the serine supplies its oxygen atom to form the C-terminus of the beta chain, while the remainder of the serine residue undergoes an oxidative deamination to produce ammonia and the pyruvoyl prosthetic group on the alpha chain. During this reaction, the Ser that is part of the protease active site of the proenzyme becomes the pyruvoyl prosthetic group, which constitutes an essential element of the active site of the mature decarboxylase.

Its subcellular location is the cell membrane. The catalysed reaction is a 1,2-diacyl-sn-glycero-3-phospho-L-serine + H(+) = a 1,2-diacyl-sn-glycero-3-phosphoethanolamine + CO2. It participates in phospholipid metabolism; phosphatidylethanolamine biosynthesis; phosphatidylethanolamine from CDP-diacylglycerol: step 2/2. Its function is as follows. Catalyzes the formation of phosphatidylethanolamine (PtdEtn) from phosphatidylserine (PtdSer). This chain is Phosphatidylserine decarboxylase proenzyme, found in Sodalis glossinidius (strain morsitans).